Reading from the N-terminus, the 146-residue chain is Acidic phospholipase A2 S5-32M (146 aa).

The first 19 residues, 1–19 (MYPAHLLVLLAVCVSLLGA), serve as a signal peptide directing secretion. The propeptide occupies 20–27 (ASIPPQPL). Intrachain disulfides connect C38-C98, C54-C145, C56-C72, C71-C126, C78-C119, C87-C112, and C105-C117. Positions 55, 57, and 59 each coordinate Ca(2+). The active site involves H75. A Ca(2+)-binding site is contributed by D76. D120 is an active-site residue.

Belongs to the phospholipase A2 family. Group I subfamily. D49 sub-subfamily. Requires Ca(2+) as cofactor. Expressed by the venom gland.

Its subcellular location is the secreted. The catalysed reaction is a 1,2-diacyl-sn-glycero-3-phosphocholine + H2O = a 1-acyl-sn-glycero-3-phosphocholine + a fatty acid + H(+). Its function is as follows. Snake venom phospholipase A2 (PLA2) that inhibits collagen-induced platelet aggregation. PLA2 catalyzes the calcium-dependent hydrolysis of the 2-acyl groups in 3-sn-phosphoglycerides. This Austrelaps superbus (Lowland copperhead snake) protein is Acidic phospholipase A2 S5-32M.